The primary structure comprises 457 residues: Secreted effector kinase SteC (457 aa).

Lys-256 is an ATP binding site.

Belongs to the protein kinase superfamily. In terms of processing, autophosphorylated.

The protein resides in the secreted. It is found in the host cytoplasm. In terms of biological role, effector proteins function to alter host cell physiology and promote bacterial survival in host tissues. This protein is a kinase, which is required for SPI-2 T3SS-dependent F-actin meshwork formation in infected host cells. The chain is Secreted effector kinase SteC (steC) from Salmonella typhimurium (strain LT2 / SGSC1412 / ATCC 700720).